The chain runs to 252 residues: 3-dehydroquinate dehydratase (252 aa).

Residues S21, 46-48 (EWR), and R82 each bind 3-dehydroquinate. The active-site Proton donor/acceptor is H143. K170 functions as the Schiff-base intermediate with substrate in the catalytic mechanism. 3 residues coordinate 3-dehydroquinate: R213, S232, and Q236.

It belongs to the type-I 3-dehydroquinase family. As to quaternary structure, homodimer.

The enzyme catalyses 3-dehydroquinate = 3-dehydroshikimate + H2O. Its pathway is metabolic intermediate biosynthesis; chorismate biosynthesis; chorismate from D-erythrose 4-phosphate and phosphoenolpyruvate: step 3/7. Functionally, involved in the third step of the chorismate pathway, which leads to the biosynthesis of aromatic amino acids. Catalyzes the cis-dehydration of 3-dehydroquinate (DHQ) and introduces the first double bond of the aromatic ring to yield 3-dehydroshikimate. This is 3-dehydroquinate dehydratase from Escherichia coli O127:H6 (strain E2348/69 / EPEC).